Reading from the N-terminus, the 631-residue chain is Pescadillo homolog (631 aa).

Residues 321-414 (RLRTLFKGLK…QLLPTNDYFL (94 aa)) form the BRCT domain. The segment covering 428–442 (SKRDSYIPPEEKALH) has biased composition (basic and acidic residues). Disordered regions lie at residues 428-471 (SKRD…EADQ) and 489-560 (YKKY…EVDE). A phosphoserine mark is found at serine 453 and serine 457. 2 stretches are compositionally biased toward acidic residues: residues 453 to 471 (SEEE…EADQ) and 498 to 525 (VNED…EDVD). Basic and acidic residues predominate over residues 526 to 538 (EQTKRKQQEKEKM). Basic residues predominate over residues 544 to 553 (KVHKVNKRQV). Residues 593 to 629 (LRKKRRNIDADTKEAKKAAKREARKLAAEAAARAAKL) are a coiled coil.

Belongs to the pescadillo family.

Its subcellular location is the nucleus. The protein localises to the nucleolus. It is found in the nucleoplasm. Required for maturation of ribosomal RNAs and formation of the large ribosomal subunit. The polypeptide is Pescadillo homolog (Drosophila persimilis (Fruit fly)).